We begin with the raw amino-acid sequence, 109 residues long: Large ribosomal subunit protein uL24 (109 aa).

It belongs to the universal ribosomal protein uL24 family. Part of the 50S ribosomal subunit.

In terms of biological role, one of two assembly initiator proteins, it binds directly to the 5'-end of the 23S rRNA, where it nucleates assembly of the 50S subunit. One of the proteins that surrounds the polypeptide exit tunnel on the outside of the subunit. The sequence is that of Large ribosomal subunit protein uL24 from Ehrlichia chaffeensis (strain ATCC CRL-10679 / Arkansas).